Here is a 104-residue protein sequence, read N- to C-terminus: Large ribosomal subunit protein uL24 (104 aa).

Belongs to the universal ribosomal protein uL24 family. As to quaternary structure, part of the 50S ribosomal subunit.

In terms of biological role, one of two assembly initiator proteins, it binds directly to the 5'-end of the 23S rRNA, where it nucleates assembly of the 50S subunit. Functionally, one of the proteins that surrounds the polypeptide exit tunnel on the outside of the subunit. In Shewanella baltica (strain OS223), this protein is Large ribosomal subunit protein uL24.